A 206-amino-acid chain; its full sequence is Small ribosomal subunit protein uS4 (206 aa).

The interval 18–45 is disordered; it reads NIWGRPKSPVNRREYGPGQHGQRRKGKM. The S4 RNA-binding domain maps to 94–157; sequence RRLDAVVYRA…KQLASVLEAV (64 aa).

Belongs to the universal ribosomal protein uS4 family. In terms of assembly, part of the 30S ribosomal subunit. Contacts protein S5. The interaction surface between S4 and S5 is involved in control of translational fidelity.

One of the primary rRNA binding proteins, it binds directly to 16S rRNA where it nucleates assembly of the body of the 30S subunit. Functionally, with S5 and S12 plays an important role in translational accuracy. This chain is Small ribosomal subunit protein uS4, found in Ruegeria pomeroyi (strain ATCC 700808 / DSM 15171 / DSS-3) (Silicibacter pomeroyi).